Reading from the N-terminus, the 148-residue chain is UPF0260 protein Maqu_1608 (148 aa).

It belongs to the UPF0260 family.

This is UPF0260 protein Maqu_1608 from Marinobacter nauticus (strain ATCC 700491 / DSM 11845 / VT8) (Marinobacter aquaeolei).